Here is a 346-residue protein sequence, read N- to C-terminus: Annexin A1 (346 aa).

N-acetylalanine is present on Ala2. Ser5 carries the phosphoserine; by TRPM7 modification. Residue Gln19 forms an Isoglutamyl lysine isopeptide (Gln-Lys) (interchain with K-?) linkage. Tyr21 carries the post-translational modification Phosphotyrosine; by EGFR. Ser27 bears the Phosphoserine; by PKC mark. Ser34 and Ser37 each carry phosphoserine. The residue at position 41 (Thr41) is a Phosphothreonine. Annexin repeat units follow at residues 42-113 (FNPS…ALLK), 114-185 (TPAQ…SLAK), 197-269 (DLAD…AIVK), and 273-344 (SKPA…ALCG). Lys58 carries the N6-acetyllysine modification. Ca(2+) is bound by residues Gly59, Val60, Glu62, Lys97, Leu100, Glu105, Met127, Gly129, Gly131, Thr132, and Glu134. The residue at position 136 (Thr136) is a Phosphothreonine. Residues Asp171, Gly210, and Arg213 each contribute to the Ca(2+) site. Lys214 participates in a covalent cross-link: Glycyl lysine isopeptide (Lys-Gly) (interchain with G-Cter in SUMO1); alternate. Residue Lys214 forms a Glycyl lysine isopeptide (Lys-Gly) (interchain with G-Cter in SUMO2); alternate linkage. A Ca(2+)-binding site is contributed by Gly215. Residue Lys239 is modified to N6-acetyllysine. Ca(2+) is bound by residues Asp253, Glu255, and Leu256. Residue Lys257 forms a Glycyl lysine isopeptide (Lys-Gly) (interchain with G-Cter in SUMO1) linkage. Glu261, Met286, Gly288, and Gly290 together coordinate Ca(2+). N6-acetyllysine is present on Lys312. Cys324 and Cys343 form a disulfide bridge. Ca(2+) contacts are provided by Leu328, Glu330, and Thr331. Lys332 participates in a covalent cross-link: Glycyl lysine isopeptide (Lys-Gly) (interchain with G-Cter in SUMO1). Position 336 (Glu336) interacts with Ca(2+).

Belongs to the annexin family. As to quaternary structure, homodimer; non-covalently linked. Homodimer; linked by transglutamylation. Homodimers linked by transglutamylation are observed in placenta, but not in other tissues. Interacts with S100A11. Heterotetramer, formed by two molecules each of S100A11 and ANXA1. Interacts with DYSF. Interacts with EGFR. In terms of processing, phosphorylated by protein kinase C, EGFR and TRPM7. Phosphorylated in response to EGF treatment. Post-translationally, sumoylated. Proteolytically cleaved by cathepsin CTSG to release the active N-terminal peptide Ac2-26. Detected in resting neutrophils. Detected in peripheral blood T-cells. Detected in extracellular vesicles in blood serum from patients with inflammatory bowel disease, but not in serum from healthy donors. Detected in placenta (at protein level). Detected in liver.

It is found in the nucleus. The protein localises to the cytoplasm. It localises to the cell projection. The protein resides in the cilium. Its subcellular location is the cell membrane. It is found in the membrane. The protein localises to the endosome membrane. It localises to the basolateral cell membrane. The protein resides in the apical cell membrane. Its subcellular location is the lateral cell membrane. It is found in the secreted. The protein localises to the extracellular space. It localises to the extracellular exosome. The protein resides in the cytoplasmic vesicle. Its subcellular location is the secretory vesicle lumen. It is found in the phagocytic cup. The protein localises to the early endosome. It localises to the cytoplasmic vesicle membrane. Functionally, plays important roles in the innate immune response as effector of glucocorticoid-mediated responses and regulator of the inflammatory process. Has anti-inflammatory activity. Plays a role in glucocorticoid-mediated down-regulation of the early phase of the inflammatory response. Contributes to the adaptive immune response by enhancing signaling cascades that are triggered by T-cell activation, regulates differentiation and proliferation of activated T-cells. Promotes the differentiation of T-cells into Th1 cells and negatively regulates differentiation into Th2 cells. Has no effect on unstimulated T cells. Negatively regulates hormone exocytosis via activation of the formyl peptide receptors and reorganization of the actin cytoskeleton. Has high affinity for Ca(2+) and can bind up to eight Ca(2+) ions. Displays Ca(2+)-dependent binding to phospholipid membranes. Plays a role in the formation of phagocytic cups and phagosomes. Plays a role in phagocytosis by mediating the Ca(2+)-dependent interaction between phagosomes and the actin cytoskeleton. Functions at least in part by activating the formyl peptide receptors and downstream signaling cascades. Promotes chemotaxis of granulocytes and monocytes via activation of the formyl peptide receptors. Promotes rearrangement of the actin cytoskeleton, cell polarization and cell migration. Promotes resolution of inflammation and wound healing. Acts via neutrophil N-formyl peptide receptors to enhance the release of CXCL2. The chain is Annexin A1 (ANXA1) from Homo sapiens (Human).